The primary structure comprises 319 residues: Putative peptide permease protein BRA0408/BS1330_II0405 (319 aa).

6 helical membrane passes run 9–29 (LLIGLGMLLALTILIFVLLQL), 102–122 (LLLMAAGLAIAIVIGVTTGII), 138–158 (LALLGISSPAFLTALLGLYVF), 182–202 (LLRHLALPALVLSIGHAALIM), 242–262 (LPVVTLIGSTIGLAVGGAIFI), and 284–304 (YPVIMGATLVIGACVIIVNIL). The 208-residue stretch at 98-305 (IGPTLLLMAA…ACVIIVNILT (208 aa)) folds into the ABC transmembrane type-1 domain.

This sequence belongs to the binding-protein-dependent transport system permease family. The complex is composed of two ATP-binding proteins (BRA0404 and BRA0405), two transmembrane proteins (BRA0407 and BRA0408) and a solute-binding protein (BRA0409).

It localises to the cell inner membrane. Its function is as follows. Probably part of an ABC transporter complex that could be involved in peptide import. Probably responsible for the translocation of the substrate across the membrane. This chain is Putative peptide permease protein BRA0408/BS1330_II0405, found in Brucella suis biovar 1 (strain 1330).